We begin with the raw amino-acid sequence, 1389 residues long: DNA-directed RNA polymerase subunit beta (1389 aa).

It belongs to the RNA polymerase beta chain family. In terms of assembly, in plastids the minimal PEP RNA polymerase catalytic core is composed of four subunits: alpha, beta, beta', and beta''. When a (nuclear-encoded) sigma factor is associated with the core the holoenzyme is formed, which can initiate transcription.

The protein resides in the plastid. The protein localises to the chloroplast. It carries out the reaction RNA(n) + a ribonucleoside 5'-triphosphate = RNA(n+1) + diphosphate. Its function is as follows. DNA-dependent RNA polymerase catalyzes the transcription of DNA into RNA using the four ribonucleoside triphosphates as substrates. The sequence is that of DNA-directed RNA polymerase subunit beta from Phaeodactylum tricornutum (strain CCAP 1055/1).